Reading from the N-terminus, the 89-residue chain is Small ribosomal subunit protein uS15 (89 aa).

The span at 1-20 (MSITQERKSALIAEHARGKT) shows a compositional bias: basic and acidic residues. A disordered region spans residues 1-24 (MSITQERKSALIAEHARGKTDTGS).

The protein belongs to the universal ribosomal protein uS15 family. Part of the 30S ribosomal subunit. Forms a bridge to the 50S subunit in the 70S ribosome, contacting the 23S rRNA.

Its function is as follows. One of the primary rRNA binding proteins, it binds directly to 16S rRNA where it helps nucleate assembly of the platform of the 30S subunit by binding and bridging several RNA helices of the 16S rRNA. In terms of biological role, forms an intersubunit bridge (bridge B4) with the 23S rRNA of the 50S subunit in the ribosome. This is Small ribosomal subunit protein uS15 from Maricaulis maris (strain MCS10) (Caulobacter maris).